We begin with the raw amino-acid sequence, 144 residues long: Large ribosomal subunit protein uL15 (144 aa).

A disordered region spans residues 1 to 53; that stretch reads MRLNTLSPAEGAKHAPKRLGRGIGSGLGKTGGRGHKGQNSRSGGGVRRGFEGG. A compositionally biased stretch (gly residues) spans 21 to 31; that stretch reads RGIGSGLGKTG.

Belongs to the universal ribosomal protein uL15 family. Part of the 50S ribosomal subunit.

Binds to the 23S rRNA. The chain is Large ribosomal subunit protein uL15 from Pectobacterium atrosepticum (strain SCRI 1043 / ATCC BAA-672) (Erwinia carotovora subsp. atroseptica).